A 334-amino-acid polypeptide reads, in one-letter code: Chorismatase (334 aa).

Positions 143, 150, 203, and 216 each coordinate substrate. Residue Glu328 is the Proton acceptor of the active site.

The protein belongs to the FkbO/Hyg5 family. As to quaternary structure, monomer.

It catalyses the reaction chorismate + H2O = (3R,4R)-3,4-dihydroxy-3,4-dihydrobenzoate + pyruvate. In terms of biological role, involved in the biosynthesis of the macrocyclic amino acid-linked polyketides rapamycin which is a potent immunosuppressant that prevents T-cell proliferation through initial binding to the immunophilin FKBP12. Catalyzes the hydrolysis of chorismate via a 1,4-conjugate elimination of water to yield (4R,5R)-4,5-dihydroxycyclohexa-1,5-dienecarboxylic acid (DCDC). This is Chorismatase (rapK) from Streptomyces rapamycinicus (strain ATCC 29253 / DSM 41530 / NRRL 5491 / AYB-994) (Streptomyces hygroscopicus (strain ATCC 29253)).